An 859-amino-acid polypeptide reads, in one-letter code: DNA mismatch repair protein MutS (859 aa).

615-622 is a binding site for ATP; the sequence is GPNMGGKS.

This sequence belongs to the DNA mismatch repair MutS family.

Its function is as follows. This protein is involved in the repair of mismatches in DNA. It is possible that it carries out the mismatch recognition step. This protein has a weak ATPase activity. This is DNA mismatch repair protein MutS from Chromohalobacter salexigens (strain ATCC BAA-138 / DSM 3043 / CIP 106854 / NCIMB 13768 / 1H11).